The following is a 450-amino-acid chain: Gastrin/cholecystokinin type B receptor (450 aa).

Residues 1–57 are Extracellular-facing; it reads MELLKLNSSVQGPGPGSGSSLCHPGVSLLNSSSAGNLSCEPPRIRGTGTRELELAIR. Asn-7, Asn-30, and Asn-36 each carry an N-linked (GlcNAc...) asparagine glycan. Residues 58-79 form a helical membrane-spanning segment; the sequence is ITLYAVIFLMSIGGNMLIIVVL. The Cytoplasmic segment spans residues 80 to 87; sequence GLSRRLRT. A helical transmembrane segment spans residues 88–109; that stretch reads VTNAFLLSLAVSDLLLAVACMP. Residues 110 to 131 lie on the Extracellular side of the membrane; it reads FTLLPNLMGTFIFGTVICKAVS. The cysteines at positions 127 and 205 are disulfide-linked. Residues 132 to 150 traverse the membrane as a helical segment; sequence YLMGVSVSVSTLNLVAIAL. At 151 to 170 the chain is on the cytoplasmic side; it reads ERYSAICRPLQARVWQTRSH. A helical transmembrane segment spans residues 171 to 189; sequence AARVILATWLLSGLLMVPY. Topologically, residues 190 to 219 are extracellular; it reads PVYTVVQPVGPRVLQCMHRWPSARVRQTWS. The helical transmembrane segment at 220–242 threads the bilayer; that stretch reads VLLLMLLFFIPGVVMAVAYGLIS. Residues 243 to 336 are Cytoplasmic-facing; that stretch reads RELYLGLRFD…KLLAKKRVVR (94 aa). A disordered region spans residues 258-277; it reads DTQSRVRNQGGLPGGTAPGP. Residues 337-358 traverse the membrane as a helical segment; that stretch reads MLLVIVLLFFLCWLPIYSANTW. Over 359-376 the chain is Extracellular; that stretch reads CAFDGPGAHRALSGAPIS. A helical transmembrane segment spans residues 377-397; that stretch reads FIHLLSYASACVNPLVYCFMH. The Cytoplasmic segment spans residues 398-450; that stretch reads RRFRQACLDTCARCCPRPPRARPRPLPDEDPPTPSIASLSRLSYTTISTLGPG. Cys-411 is lipidated: S-palmitoyl cysteine.

This sequence belongs to the G-protein coupled receptor 1 family. Stomach and brain.

Its subcellular location is the cell membrane. In terms of biological role, receptor for gastrin and cholecystokinin. The CCK-B receptors occur throughout the central nervous system where they modulate anxiety, analgesia, arousal, and neuroleptic activity. This receptor mediates its action by association with G proteins that activate a phosphatidylinositol-calcium second messenger system. The polypeptide is Gastrin/cholecystokinin type B receptor (CCKBR) (Mastomys natalensis (African soft-furred rat)).